The primary structure comprises 176 residues: Mediator of RNA polymerase II transcription subunit 11 (176 aa).

Residues 98 to 176 (SRVRELEETK…MGGDSSMSTN (79 aa)) are disordered. A compositionally biased stretch (basic and acidic residues) spans 99-108 (RVRELEETKA). Low complexity predominate over residues 124–154 (HAAAQQQQQQQQQQQQQQQQMQQAAQQQQQQ).

The protein belongs to the Mediator complex subunit 11 family. Component of the Mediator complex, which may include CDK8, MED4, MED6, MED11, MED14, MED17, MED18, MED20, MED21, MED22, MED27, MED28, MED30 and MED31.

It localises to the nucleus. Its function is as follows. Component of the Mediator complex, a coactivator involved in the regulated transcription of nearly all RNA polymerase II-dependent genes. Mediator functions as a bridge to convey information from gene-specific regulatory proteins to the basal RNA polymerase II transcription machinery. Mediator is recruited to promoters by direct interactions with regulatory proteins and serves as a scaffold for the assembly of a functional pre-initiation complex with RNA polymerase II and the general transcription factors. The protein is Mediator of RNA polymerase II transcription subunit 11 (MED11) of Drosophila melanogaster (Fruit fly).